The chain runs to 178 residues: Meiotically up-regulated gene 95 protein (178 aa).

At 1 to 12 the chain is on the cytoplasmic side; it reads MNLFVYIAQNPT. Residues 13–30 traverse the membrane as a helical; Signal-anchor for type II membrane protein segment; the sequence is LTKWFFCCVCTILTMPFF. Topologically, residues 31-178 are lumenal; that stretch reads KKPYRKRGIS…ESIEKPENDN (148 aa).

Its subcellular location is the endoplasmic reticulum membrane. In terms of biological role, has a role in meiosis. This Schizosaccharomyces pombe (strain 972 / ATCC 24843) (Fission yeast) protein is Meiotically up-regulated gene 95 protein (mug95).